Consider the following 405-residue polypeptide: Tryptophan synthase beta chain (405 aa).

Residue K95 is modified to N6-(pyridoxal phosphate)lysine.

This sequence belongs to the TrpB family. Tetramer of two alpha and two beta chains. Pyridoxal 5'-phosphate serves as cofactor.

It catalyses the reaction (1S,2R)-1-C-(indol-3-yl)glycerol 3-phosphate + L-serine = D-glyceraldehyde 3-phosphate + L-tryptophan + H2O. It participates in amino-acid biosynthesis; L-tryptophan biosynthesis; L-tryptophan from chorismate: step 5/5. In terms of biological role, the beta subunit is responsible for the synthesis of L-tryptophan from indole and L-serine. In Pseudomonas putida (strain ATCC 47054 / DSM 6125 / CFBP 8728 / NCIMB 11950 / KT2440), this protein is Tryptophan synthase beta chain.